The following is a 282-amino-acid chain: MKYIGAHVSASGGVSNAPLNAKSIGADAFALFVKNQRQWSAKPLTKSEISSFKTNLKNANISLEHILPHNSYLINLGHPDPQQRKKSIDAFLDEIYRCDLLDLKMINFHPGSHLKEIDENICLSNISSSINYILENSSGIKLVIENTAGQGSNMGFKFEHLGYLVKNSCDKNRIGVCIDTCHLFCSGYDIRSKSAYEKTMDDFGKIVGFEFLSGMHLNDSKCDLASRKDRHESLGKGCIGWSGFENIMNDKRIDEIPLILETIDNSIWADEIIALRNLIKGN.

The Zn(2+) site is built by His-69, His-109, Glu-145, Asp-179, His-182, His-216, Asp-229, His-231, and Glu-261.

The protein belongs to the AP endonuclease 2 family. Requires Zn(2+) as cofactor.

It carries out the reaction Endonucleolytic cleavage to 5'-phosphooligonucleotide end-products.. In terms of biological role, endonuclease IV plays a role in DNA repair. It cleaves phosphodiester bonds at apurinic or apyrimidinic (AP) sites, generating a 3'-hydroxyl group and a 5'-terminal sugar phosphate. The protein is Probable endonuclease 4 of Campylobacter fetus subsp. fetus (strain 82-40).